The primary structure comprises 530 residues: Bifunctional purine biosynthesis protein PurH (530 aa).

Residues 1-148 form the MGS-like domain; it reads MNNARPIRRA…KNHKDVTIVV (148 aa).

This sequence belongs to the PurH family.

It carries out the reaction (6R)-10-formyltetrahydrofolate + 5-amino-1-(5-phospho-beta-D-ribosyl)imidazole-4-carboxamide = 5-formamido-1-(5-phospho-D-ribosyl)imidazole-4-carboxamide + (6S)-5,6,7,8-tetrahydrofolate. The catalysed reaction is IMP + H2O = 5-formamido-1-(5-phospho-D-ribosyl)imidazole-4-carboxamide. It functions in the pathway purine metabolism; IMP biosynthesis via de novo pathway; 5-formamido-1-(5-phospho-D-ribosyl)imidazole-4-carboxamide from 5-amino-1-(5-phospho-D-ribosyl)imidazole-4-carboxamide (10-formyl THF route): step 1/1. Its pathway is purine metabolism; IMP biosynthesis via de novo pathway; IMP from 5-formamido-1-(5-phospho-D-ribosyl)imidazole-4-carboxamide: step 1/1. In Vibrio parahaemolyticus serotype O3:K6 (strain RIMD 2210633), this protein is Bifunctional purine biosynthesis protein PurH.